The sequence spans 161 residues: Nucleotide-binding protein GM21_0633 (161 aa).

The protein belongs to the YajQ family.

Its function is as follows. Nucleotide-binding protein. This is Nucleotide-binding protein GM21_0633 from Geobacter sp. (strain M21).